Consider the following 332-residue polypeptide: Fructose-1,6-bisphosphatase class 1 (332 aa).

Mg(2+)-binding residues include glutamate 94, aspartate 116, leucine 118, and aspartate 119. Residues 119-122 (DGSS), asparagine 211, tyrosine 239, 257-259 (YLY), and lysine 269 each bind substrate. Glutamate 275 serves as a coordination point for Mg(2+).

It belongs to the FBPase class 1 family. Homotetramer. The cofactor is Mg(2+).

The protein localises to the cytoplasm. The enzyme catalyses beta-D-fructose 1,6-bisphosphate + H2O = beta-D-fructose 6-phosphate + phosphate. It participates in carbohydrate biosynthesis; Calvin cycle. The chain is Fructose-1,6-bisphosphatase class 1 from Synechococcus sp. (strain JA-2-3B'a(2-13)) (Cyanobacteria bacterium Yellowstone B-Prime).